The following is a 493-amino-acid chain: tRNA-dihydrouridine(20) synthase [NAD(P)+]-like (493 aa).

A catalytic domain region spans residues 1–333 (MILNSLSLCY…TQELDAQQAR (333 aa)). FMN is bound by residues 18 to 20 (PMV), Glu43, and Gln87. Cys116 (proton donor) is an active-site residue. FMN is bound by residues Lys155, His183, 214–216 (NGG), and 242–243 (AR). Positions 330–342 (QQARLSAKTSEQT) are enriched in polar residues. Positions 330–349 (QQARLSAKTSEQTGEPAEDT) are disordered. Interaction with tRNA regions lie at residues 367–371 (QITPK) and 420–424 (KLAEQ). Residues 369-436 (TPKMCLLEWC…AIVCLRSQGL (68 aa)) enclose the DRBM domain. Positions 438-493 (EGRLGEESPSLHKRKREAPDQDPGGPRAQELAQPGDLCKKPFVALGSGEESPLEGW) are disordered. Ser445 and Ser488 each carry phosphoserine.

This sequence belongs to the Dus family. Dus2 subfamily. In terms of assembly, interacts with EPRS1. Interacts (via DRBM domain) with PRKRA and EIF2AK2/PKR (via DRBM 1 domain). FMN serves as cofactor. Weak expression in heart, placenta and skeletal muscle. Up-regulated in most lung cancer cells (at protein level).

Its subcellular location is the cytoplasm. The protein localises to the endoplasmic reticulum. The catalysed reaction is 5,6-dihydrouridine(20) in tRNA + NADP(+) = uridine(20) in tRNA + NADPH + H(+). Its activity is regulated as follows. Inhibited by canertinib, PD 168393, AST-1306 and PF-6274484. Catalyzes the NADPH-dependent synthesis of dihydrouridine, a modified base found in the D-loop of most tRNAs. Specifically modifies U20 in cytoplasmic tRNAs. Activity depends on the presence of guanosine at position 19 in the tRNA substrate. Negatively regulates the activation of EIF2AK2/PKR. In Homo sapiens (Human), this protein is tRNA-dihydrouridine(20) synthase [NAD(P)+]-like (DUS2).